The chain runs to 102 residues: Monothiol glutaredoxin-S5 (102 aa).

One can recognise a Glutaredoxin domain in the interval 1 to 101; it reads MENLQKMISE…PMLKRAGALW (101 aa). Cysteine 21 provides a ligand contact to [2Fe-2S] cluster. A Responsive for interaction with TGA factors motif is present at residues 99-102; it reads ALWL.

It belongs to the glutaredoxin family. CC-type subfamily.

It localises to the cytoplasm. The protein resides in the nucleus. In terms of biological role, may only reduce GSH-thiol disulfides, but not protein disulfides. The sequence is that of Monothiol glutaredoxin-S5 (GRXS5) from Arabidopsis thaliana (Mouse-ear cress).